The primary structure comprises 90 residues: MITQLYRERTAADLKNRISKVLLNGNETEIVELTIQGAVVTVLTQREEDIKHIKSVQILDDQNNVITERTTDLDVSNNRTLDFRITFEVV.

This is an uncharacterized protein from Bacillus subtilis (strain 168).